A 130-amino-acid polypeptide reads, in one-letter code: Small ribosomal subunit protein uS11 (130 aa).

This sequence belongs to the universal ribosomal protein uS11 family. In terms of assembly, part of the 30S ribosomal subunit. Interacts with proteins S7 and S18. Binds to IF-3.

In terms of biological role, located on the platform of the 30S subunit, it bridges several disparate RNA helices of the 16S rRNA. Forms part of the Shine-Dalgarno cleft in the 70S ribosome. This chain is Small ribosomal subunit protein uS11, found in Prochlorococcus marinus (strain MIT 9215).